Reading from the N-terminus, the 313-residue chain is UPF0761 membrane protein VV0203 (313 aa).

The next 6 membrane-spanning stretches (helical) occupy residues 41-61 (YLAY…LSIL), 104-124 (MTAV…SNID), 139-159 (AVFS…LVGA), 185-205 (LLRW…YLLV), 215-235 (AVVG…GFAA), and 249-269 (ALAA…IVLI). The disordered stretch occupies residues 293 to 313 (LPNNDTELEKDTQRDRFDSES). The segment covering 299–313 (ELEKDTQRDRFDSES) has biased composition (basic and acidic residues).

Belongs to the UPF0761 family.

It is found in the cell inner membrane. This is UPF0761 membrane protein VV0203 from Vibrio vulnificus (strain YJ016).